The primary structure comprises 212 residues: GTP-binding nuclear protein Ran (212 aa).

The 165-residue stretch at 3–167 (EKEQIKLVLV…VWLTSKLLGN (165 aa)) folds into the Small GTPase Ran-type domain. 14–21 (DGGVGKTT) lines the GTP pocket. The segment at 33 to 41 (PRYIPTLGV) is switch-I. GTP is bound by residues G64, 118-121 (NKVD), and 146-148 (SAK). A switch-II region spans residues 64–80 (GQEKFGGLRDGYYIQGN).

It belongs to the small GTPase superfamily. Ran family. As to quaternary structure, found in a nuclear export complex with RanGTP, exportin and pre-miRNA.

The protein localises to the nucleus. In terms of biological role, GTP-binding protein involved in nucleocytoplasmic transport. Required for the import of protein into the nucleus and also for RNA export. Involved in chromatin condensation and control of cell cycle. The polypeptide is GTP-binding nuclear protein Ran (ranA) (Dictyostelium discoideum (Social amoeba)).